The following is a 189-amino-acid chain: GTP cyclohydrolase 1 (189 aa).

The Zn(2+) site is built by Cys79, His82, and Cys150.

This sequence belongs to the GTP cyclohydrolase I family. In terms of assembly, homomer.

It catalyses the reaction GTP + H2O = 7,8-dihydroneopterin 3'-triphosphate + formate + H(+). It functions in the pathway cofactor biosynthesis; 7,8-dihydroneopterin triphosphate biosynthesis; 7,8-dihydroneopterin triphosphate from GTP: step 1/1. The protein is GTP cyclohydrolase 1 of Rickettsia rickettsii (strain Iowa).